The chain runs to 291 residues: Lipoyl synthase 1 (291 aa).

C34, C39, C45, C60, C64, C67, and S274 together coordinate [4Fe-4S] cluster. Residues 46–263 form the Radical SAM core domain; the sequence is FQAGTATFLI…QVYGEELGFL (218 aa).

The protein belongs to the radical SAM superfamily. Lipoyl synthase family. [4Fe-4S] cluster is required as a cofactor.

It is found in the cytoplasm. It carries out the reaction [[Fe-S] cluster scaffold protein carrying a second [4Fe-4S](2+) cluster] + N(6)-octanoyl-L-lysyl-[protein] + 2 oxidized [2Fe-2S]-[ferredoxin] + 2 S-adenosyl-L-methionine + 4 H(+) = [[Fe-S] cluster scaffold protein] + N(6)-[(R)-dihydrolipoyl]-L-lysyl-[protein] + 4 Fe(3+) + 2 hydrogen sulfide + 2 5'-deoxyadenosine + 2 L-methionine + 2 reduced [2Fe-2S]-[ferredoxin]. The protein operates within protein modification; protein lipoylation via endogenous pathway; protein N(6)-(lipoyl)lysine from octanoyl-[acyl-carrier-protein]: step 2/2. Catalyzes the radical-mediated insertion of two sulfur atoms into the C-6 and C-8 positions of the octanoyl moiety bound to the lipoyl domains of lipoate-dependent enzymes, thereby converting the octanoylated domains into lipoylated derivatives. This is Lipoyl synthase 1 from Nostoc sp. (strain PCC 7120 / SAG 25.82 / UTEX 2576).